The chain runs to 185 residues: Peptide deformylase 2 (185 aa).

Cys108 and His150 together coordinate Fe cation. Glu151 is an active-site residue. His154 provides a ligand contact to Fe cation.

It belongs to the polypeptide deformylase family. Requires Fe(2+) as cofactor.

The catalysed reaction is N-terminal N-formyl-L-methionyl-[peptide] + H2O = N-terminal L-methionyl-[peptide] + formate. Its function is as follows. Removes the formyl group from the N-terminal Met of newly synthesized proteins. Requires at least a dipeptide for an efficient rate of reaction. N-terminal L-methionine is a prerequisite for activity but the enzyme has broad specificity at other positions. This chain is Peptide deformylase 2, found in Nitrosomonas europaea (strain ATCC 19718 / CIP 103999 / KCTC 2705 / NBRC 14298).